Consider the following 468-residue polypeptide: Ribulose bisphosphate carboxylase large chain (468 aa).

An N6,N6,N6-trimethyllysine modification is found at Lys5. Substrate is bound by residues Asn114 and Thr164. Catalysis depends on Lys166, which acts as the Proton acceptor. Lys168 contributes to the substrate binding site. 3 residues coordinate Mg(2+): Lys192, Asp194, and Glu195. Lys192 carries the N6-carboxylysine modification. The active-site Proton acceptor is His285. Substrate is bound by residues Arg286, His318, and Ser370.

This sequence belongs to the RuBisCO large chain family. Type I subfamily. In terms of assembly, heterohexadecamer of 8 large chains and 8 small chains; disulfide-linked. The disulfide link is formed within the large subunit homodimers. Requires Mg(2+) as cofactor. The disulfide bond which can form in the large chain dimeric partners within the hexadecamer appears to be associated with oxidative stress and protein turnover.

The protein resides in the plastid. Its subcellular location is the chloroplast. The enzyme catalyses 2 (2R)-3-phosphoglycerate + 2 H(+) = D-ribulose 1,5-bisphosphate + CO2 + H2O. It catalyses the reaction D-ribulose 1,5-bisphosphate + O2 = 2-phosphoglycolate + (2R)-3-phosphoglycerate + 2 H(+). In terms of biological role, ruBisCO catalyzes two reactions: the carboxylation of D-ribulose 1,5-bisphosphate, the primary event in carbon dioxide fixation, as well as the oxidative fragmentation of the pentose substrate in the photorespiration process. Both reactions occur simultaneously and in competition at the same active site. In Solandra grandiflora (Chalice vine), this protein is Ribulose bisphosphate carboxylase large chain.